A 176-amino-acid chain; its full sequence is Disulfide bond formation protein B (176 aa).

The Cytoplasmic segment spans residues M1 to S13. The chain crosses the membrane as a helical span at residues W14–F30. Topologically, residues F31–V48 are periplasmic. Residues C40 and C43 are joined by a disulfide bond. A helical membrane pass occupies residues A49 to P64. Over Q65 to W71 the chain is Cytoplasmic. The chain crosses the membrane as a helical span at residues A72 to I89. Topologically, residues E90–Q144 are periplasmic. A disulfide bridge connects residues C104 and C130. Residues W145–A163 traverse the membrane as a helical segment. Over Q164 to M176 the chain is Cytoplasmic.

It belongs to the DsbB family.

The protein resides in the cell inner membrane. Functionally, required for disulfide bond formation in some periplasmic proteins. Acts by oxidizing the DsbA protein. This Photobacterium profundum (strain SS9) protein is Disulfide bond formation protein B.